The following is a 343-amino-acid chain: 7-epi-alpha-eudesmol synthase ((2E,6E)-farnesyl diphosphate cyclizing) (343 aa).

Residues D80 and D84 each contribute to the Mg(2+) site. The short motif at 80–84 (DDQFD) is the DDXXD motif element. Residue R177 coordinates substrate. Positions 223 and 227 each coordinate Mg(2+). R230 lines the substrate pocket. E231 is a Mg(2+) binding site. 317-318 (RY) is a substrate binding site.

Belongs to the terpene synthase family. Requires Mg(2+) as cofactor.

The catalysed reaction is (2E,6E)-farnesyl diphosphate + H2O = 7-epi-alpha-eudesmol + diphosphate. The protein operates within secondary metabolite biosynthesis; terpenoid biosynthesis. In terms of biological role, catalyzes the conversion of (2E,6E)-farnesyl diphosphate (FPP) to yield the bicyclic sesquiterpenol 7-epi-alpha-eudesmol via a 1,10-cyclization, which requires the abstraction of the pyrophosphate from FPP to yield the (E,E)-germacradienyl cation. The only accepted substrate is (2E,6E)-farnesyl diphosphate (FPP). In Streptomyces viridochromogenes (strain DSM 40736 / JCM 4977 / BCRC 1201 / Tue 494), this protein is 7-epi-alpha-eudesmol synthase ((2E,6E)-farnesyl diphosphate cyclizing).